The primary structure comprises 455 residues: D-inositol 3-phosphate glycosyltransferase (455 aa).

The disordered stretch occupies residues M1–Y25. H45 contributes to the 1D-myo-inositol 3-phosphate binding site. UDP-N-acetyl-alpha-D-glucosamine contacts are provided by residues Q51 to P52 and G59. 1D-myo-inositol 3-phosphate-binding positions include D56–N61, K114, Y147, T171, and R191. Residues R266 and K271 each contribute to the UDP-N-acetyl-alpha-D-glucosamine site. The Mg(2+) site is built by Y341, R342, and A344. UDP-N-acetyl-alpha-D-glucosamine contacts are provided by E354 and E362. Position 368 (T368) interacts with Mg(2+).

The protein belongs to the glycosyltransferase group 1 family. MshA subfamily. As to quaternary structure, homodimer.

It catalyses the reaction 1D-myo-inositol 3-phosphate + UDP-N-acetyl-alpha-D-glucosamine = 1D-myo-inositol 2-acetamido-2-deoxy-alpha-D-glucopyranoside 3-phosphate + UDP + H(+). Catalyzes the transfer of a N-acetyl-glucosamine moiety to 1D-myo-inositol 3-phosphate to produce 1D-myo-inositol 2-acetamido-2-deoxy-glucopyranoside 3-phosphate in the mycothiol biosynthesis pathway. The sequence is that of D-inositol 3-phosphate glycosyltransferase from Streptomyces bingchenggensis (strain BCW-1).